Reading from the N-terminus, the 159-residue chain is uncharacterized protein (159 aa).

Belongs to the IIV-6 136R family.

This is an uncharacterized protein from Invertebrate iridescent virus 3 (IIV-3).